Here is a 143-residue protein sequence, read N- to C-terminus: Peptide methionine sulfoxide reductase MsrB (143 aa).

Residues 16–139 (DAELRRRLTP…NSAALNFESR (124 aa)) form the MsrB domain. Zn(2+)-binding residues include Cys-55, Cys-58, Cys-104, and Cys-107. The active-site Nucleophile is the Cys-128.

This sequence belongs to the MsrB Met sulfoxide reductase family. The cofactor is Zn(2+).

The catalysed reaction is L-methionyl-[protein] + [thioredoxin]-disulfide + H2O = L-methionyl-(R)-S-oxide-[protein] + [thioredoxin]-dithiol. The protein is Peptide methionine sulfoxide reductase MsrB of Burkholderia cenocepacia (strain ATCC BAA-245 / DSM 16553 / LMG 16656 / NCTC 13227 / J2315 / CF5610) (Burkholderia cepacia (strain J2315)).